We begin with the raw amino-acid sequence, 230 residues long: 7-cyano-7-deazaguanine synthase (230 aa).

Residue 16-26 (LSGGLDSATVV) participates in ATP binding. Cysteine 195, cysteine 205, cysteine 208, and cysteine 211 together coordinate Zn(2+).

This sequence belongs to the QueC family. The cofactor is Zn(2+).

It carries out the reaction 7-carboxy-7-deazaguanine + NH4(+) + ATP = 7-cyano-7-deazaguanine + ADP + phosphate + H2O + H(+). Its pathway is purine metabolism; 7-cyano-7-deazaguanine biosynthesis. Functionally, catalyzes the ATP-dependent conversion of 7-carboxy-7-deazaguanine (CDG) to 7-cyano-7-deazaguanine (preQ(0)). The chain is 7-cyano-7-deazaguanine synthase from Pseudomonas fluorescens (strain Pf0-1).